The sequence spans 894 residues: Coiled-coil domain-containing protein 39 (894 aa).

Coiled-coil stretches lie at residues 32–143, 187–411, 461–609, and 647–788; these read TENE…DQFK, ALER…LKKE, VRSE…ELKE, and KAAQ…KLRQ. A compositionally biased stretch (low complexity) spans 844–857; it reads GSNPPSLGGSRPGS. Positions 844 to 894 are disordered; that stretch reads GSNPPSLGGSRPGSARSQTSLGSVRSARSVASQQRGGMGGSPAVRTIQLGA.

Belongs to the CCDC39 family. In terms of assembly, interacts with CCDC40/FAP172. In terms of processing, phosphorylated in flagella.

It is found in the cell projection. The protein localises to the cilium. The protein resides in the flagellum. In terms of biological role, required for assembly of dynein regulatory complex (DRC) and inner dynein arm complexes, which are responsible for ciliary beat regulation, by acting as a molecular ruler that determines the 96 nanometer (nm) repeat length and arrangements of components in cilia and flagella. Together with CCDC40/FAP172 forms a 96-nm-long complex in flagella. This complex does not act as a physical ruler, but rather act as a negative regulator for radial spokes: the complex lays along specific protofilaments, masking radial spoke binding sites and allowing recruitment of inner dynein arm (IDA) and nexin-dynein regulatory complexes (N-DRC). The sequence is that of Coiled-coil domain-containing protein 39 (CCDC39) from Chlamydomonas reinhardtii (Chlamydomonas smithii).